The chain runs to 190 residues: MTDTTVEAPATPRLKQKYNEQIVPELEKEFHYSNPMQVARVQKVVVSMGVGAAARDSKLIEGAVKDLTLITGQKPKITKAKKSVAQFHLREGQAIGAYVTLRGERMWEFLDRLLTMALPRIRDFRGINGDQFDGQGNYNFGLTEQSMFHEIDPDSIDHQRGMDITVVTSTKDDKEARVLLKHLGFPFKEN.

It belongs to the universal ribosomal protein uL5 family. As to quaternary structure, part of the 50S ribosomal subunit; part of the 5S rRNA/L5/L18/L25 subcomplex. Contacts the 5S rRNA and the P site tRNA. Forms a bridge to the 30S subunit in the 70S ribosome.

Functionally, this is one of the proteins that bind and probably mediate the attachment of the 5S RNA into the large ribosomal subunit, where it forms part of the central protuberance. In the 70S ribosome it contacts protein S13 of the 30S subunit (bridge B1b), connecting the 2 subunits; this bridge is implicated in subunit movement. Contacts the P site tRNA; the 5S rRNA and some of its associated proteins might help stabilize positioning of ribosome-bound tRNAs. In Bifidobacterium adolescentis (strain ATCC 15703 / DSM 20083 / NCTC 11814 / E194a), this protein is Large ribosomal subunit protein uL5.